Here is a 472-residue protein sequence, read N- to C-terminus: Serine/threonine-protein kinase sax-1 (472 aa).

The Protein kinase domain maps to 87 to 381 (FESLKVIGRG…LDEIKQCPFF (295 aa)). Residues 93–101 (IGRGAFGEV) and Lys116 each bind ATP. Catalysis depends on Asp210, which acts as the Proton acceptor. One can recognise an AGC-kinase C-terminal domain in the interval 382-452 (RRIDWNHIRE…KRFDGLTQKM (71 aa)).

This sequence belongs to the protein kinase superfamily. AGC Ser/Thr protein kinase family. The cofactor is Mg(2+).

The protein resides in the cytoplasm. It is found in the nucleus. It carries out the reaction L-seryl-[protein] + ATP = O-phospho-L-seryl-[protein] + ADP + H(+). The catalysed reaction is L-threonyl-[protein] + ATP = O-phospho-L-threonyl-[protein] + ADP + H(+). Acts with sax-2 to restrict the growth of both primary and secondary neurites. Regulates mechanosensory tiling by controlling the termination point of sensory dendrites. This chain is Serine/threonine-protein kinase sax-1, found in Caenorhabditis briggsae.